The sequence spans 220 residues: 7-cyano-7-deazaguanine synthase (220 aa).

10-20 (FSGGQDSTTCL) contributes to the ATP binding site. The Zn(2+) site is built by Cys-186, Cys-195, Cys-198, and Cys-201.

Belongs to the QueC family. As to quaternary structure, homodimer. The cofactor is Zn(2+).

The catalysed reaction is 7-carboxy-7-deazaguanine + NH4(+) + ATP = 7-cyano-7-deazaguanine + ADP + phosphate + H2O + H(+). Its pathway is purine metabolism; 7-cyano-7-deazaguanine biosynthesis. Functionally, catalyzes the ATP-dependent conversion of 7-carboxy-7-deazaguanine (CDG) to 7-cyano-7-deazaguanine (preQ(0)). In Bacillus cereus (strain B4264), this protein is 7-cyano-7-deazaguanine synthase.